The chain runs to 382 residues: MTPSQRVSAVFAEQFEQQPDLLVRAPGRVNLIGEHTDYNDGFVLPCAIDYETCVAIGLRDDSLVHVIAADYGNQRDLFDLDQPIGHHADQRWSDYIRGVVKYLQERGYPLRGLNLVVSGNVPQGAGLSSSASLEVAIGQAFKEALGLAITQAEIALNGQQAENQFVGCNCGIMDQMISASGKQDHALLLDCRSLETRLIPMPTDLAVLIVNSNVRRGLVDSEYNTRRQQCEAAARHYGVKALRDLDLAALEAGKAGLDEVCYRRARHVVGDNSRTLAAADALAQGDLVRLGELMADSHAAMRDDFEITVPAIDGLVEIIKARIGTEGGVRMTGGGFGGCVVALLHPDKVAEVIAAVDAEYPARFGLKADSYVCRASAGAGKL.

34–37 provides a ligand contact to substrate; the sequence is EHTD. An ATP-binding site is contributed by 124 to 130; the sequence is GAGLSSS. Positions 130 and 162 each coordinate Mg(2+). The active-site Proton acceptor is the Asp174. Tyr223 is a substrate binding site.

This sequence belongs to the GHMP kinase family. GalK subfamily.

Its subcellular location is the cytoplasm. The catalysed reaction is alpha-D-galactose + ATP = alpha-D-galactose 1-phosphate + ADP + H(+). It participates in carbohydrate metabolism; galactose metabolism. Its function is as follows. Catalyzes the transfer of the gamma-phosphate of ATP to D-galactose to form alpha-D-galactose-1-phosphate (Gal-1-P). The polypeptide is Galactokinase (Aeromonas hydrophila subsp. hydrophila (strain ATCC 7966 / DSM 30187 / BCRC 13018 / CCUG 14551 / JCM 1027 / KCTC 2358 / NCIMB 9240 / NCTC 8049)).